Consider the following 350-residue polypeptide: S-adenosylmethionine:tRNA ribosyltransferase-isomerase (350 aa).

The protein belongs to the QueA family. In terms of assembly, monomer.

The protein resides in the cytoplasm. The catalysed reaction is 7-aminomethyl-7-carbaguanosine(34) in tRNA + S-adenosyl-L-methionine = epoxyqueuosine(34) in tRNA + adenine + L-methionine + 2 H(+). It participates in tRNA modification; tRNA-queuosine biosynthesis. In terms of biological role, transfers and isomerizes the ribose moiety from AdoMet to the 7-aminomethyl group of 7-deazaguanine (preQ1-tRNA) to give epoxyqueuosine (oQ-tRNA). In Saccharophagus degradans (strain 2-40 / ATCC 43961 / DSM 17024), this protein is S-adenosylmethionine:tRNA ribosyltransferase-isomerase.